The following is a 396-amino-acid chain: Corticosteroid-binding globulin (396 aa).

An N-terminal signal peptide occupies residues 1-22; that stretch reads MSLALYTCLLWLCTSGLWTAQA. N-linked (GlcNAc...) asparagine glycans are attached at residues Asn-88 and Asn-216. A cortisol-binding site is contributed by Gln-246. Residue Asn-252 is glycosylated (N-linked (GlcNAc...) asparagine). Asp-278 is a cortisol binding site. Asn-319 and Asn-352 each carry an N-linked (GlcNAc...) asparagine glycan. Trp-384 serves as a coordination point for cortisol.

It belongs to the serpin family. As to expression, expressed by the liver; secreted in plasma.

The protein localises to the secreted. Functionally, major transport protein for glucocorticoids and progestins in the blood of almost all vertebrate species. This is Corticosteroid-binding globulin (Serpina6) from Rattus norvegicus (Rat).